A 157-amino-acid chain; its full sequence is Glycine-rich RNA-binding, abscisic acid-inducible protein (157 aa).

One can recognise an RRM domain in the interval 8 to 86; the sequence is YRCFVGGLAW…RNITVNQAQS (79 aa). The disordered stretch occupies residues 82-157; the sequence is NQAQSRGGGG…YGGGGGGWRD (76 aa). The span at 87 to 157 shows a compositional bias: gly residues; the sequence is RGGGGGGGGY…YGGGGGGWRD (71 aa).

Its function is as follows. Possibly has a role in RNA transcription or processing during stress. The polypeptide is Glycine-rich RNA-binding, abscisic acid-inducible protein (RAB15) (Zea mays (Maize)).